Consider the following 141-residue polypeptide: Nucleoside diphosphate kinase (141 aa).

ATP-binding residues include lysine 11, phenylalanine 59, arginine 87, threonine 93, arginine 104, and asparagine 114. Catalysis depends on histidine 117, which acts as the Pros-phosphohistidine intermediate.

The protein belongs to the NDK family. Homotetramer. It depends on Mg(2+) as a cofactor.

It localises to the cytoplasm. It carries out the reaction a 2'-deoxyribonucleoside 5'-diphosphate + ATP = a 2'-deoxyribonucleoside 5'-triphosphate + ADP. It catalyses the reaction a ribonucleoside 5'-diphosphate + ATP = a ribonucleoside 5'-triphosphate + ADP. In terms of biological role, major role in the synthesis of nucleoside triphosphates other than ATP. The ATP gamma phosphate is transferred to the NDP beta phosphate via a ping-pong mechanism, using a phosphorylated active-site intermediate. The protein is Nucleoside diphosphate kinase of Stenotrophomonas maltophilia (strain R551-3).